The chain runs to 303 residues: 2-(5''-triphosphoribosyl)-3'-dephosphocoenzyme-A synthase (303 aa).

Belongs to the CitG/MdcB family.

It catalyses the reaction 3'-dephospho-CoA + ATP = 2'-(5''-triphospho-alpha-D-ribosyl)-3'-dephospho-CoA + adenine. In terms of biological role, catalyzes the formation of 2-(5''-triphosphoribosyl)-3'-dephosphocoenzyme-A, the precursor of the prosthetic group of the holo-acyl carrier protein (gamma chain) of citrate lyase, from ATP and dephospho-CoA. This Escherichia fergusonii (strain ATCC 35469 / DSM 13698 / CCUG 18766 / IAM 14443 / JCM 21226 / LMG 7866 / NBRC 102419 / NCTC 12128 / CDC 0568-73) protein is 2-(5''-triphosphoribosyl)-3'-dephosphocoenzyme-A synthase.